We begin with the raw amino-acid sequence, 192 residues long: Phosphoheptose isomerase (192 aa).

The 156-residue stretch at 37–192 folds into the SIS domain; sequence LADSFKQEGK…IQLVEKEMAK (156 aa). Substrate is bound at residue 52–54; that stretch reads NGG. 2 residues coordinate Zn(2+): histidine 61 and glutamate 65. Substrate-binding positions include glutamate 65, 93 to 94, 119 to 121, serine 124, and glutamine 172; these read ND and STS. Residues glutamine 172 and histidine 180 each coordinate Zn(2+).

The protein belongs to the SIS family. GmhA subfamily. As to quaternary structure, homotetramer. The cofactor is Zn(2+).

The protein localises to the cytoplasm. It carries out the reaction 2 D-sedoheptulose 7-phosphate = D-glycero-alpha-D-manno-heptose 7-phosphate + D-glycero-beta-D-manno-heptose 7-phosphate. It functions in the pathway carbohydrate biosynthesis; D-glycero-D-manno-heptose 7-phosphate biosynthesis; D-glycero-alpha-D-manno-heptose 7-phosphate and D-glycero-beta-D-manno-heptose 7-phosphate from sedoheptulose 7-phosphate: step 1/1. Its function is as follows. Catalyzes the isomerization of sedoheptulose 7-phosphate in D-glycero-D-manno-heptose 7-phosphate. The polypeptide is Phosphoheptose isomerase (Aeromonas salmonicida (strain A449)).